Here is a 211-residue protein sequence, read N- to C-terminus: Outer-membrane lipoprotein carrier protein (211 aa).

The signal sequence occupies residues 1–24 (MNTIKILIGLLGIFLFSLSGIVSA).

Belongs to the LolA family. In terms of assembly, monomer.

The protein localises to the periplasm. Participates in the translocation of lipoproteins from the inner membrane to the outer membrane. Only forms a complex with a lipoprotein if the residue after the N-terminal Cys is not an aspartate (The Asp acts as a targeting signal to indicate that the lipoprotein should stay in the inner membrane). In Coxiella burnetii (strain RSA 331 / Henzerling II), this protein is Outer-membrane lipoprotein carrier protein.